Consider the following 97-residue polypeptide: Large ribosomal subunit protein bL28 (97 aa).

The protein belongs to the bacterial ribosomal protein bL28 family.

The sequence is that of Large ribosomal subunit protein bL28 from Rickettsia akari (strain Hartford).